A 241-amino-acid chain; its full sequence is HTH-type quorum-sensing regulator RhlR (241 aa).

The HTH luxR-type domain occupies 174-239 (LMSNPVCLSH…LAAAYAAALG (66 aa)). Positions 198–217 (SGEIAIILSISESTVNFHHK) form a DNA-binding region, H-T-H motif.

Belongs to the autoinducer-regulated transcriptional regulatory protein family. Homodimer in the absence of any acyl-L-homoserine lactone. The presence of the autoinducer C4-HSL has no significant effect on dimerization whereas N-(3-oxododecanoyl)-L-homoserine lactone (3O-C12-HSL), the LasR inducer, is able to dissociate the RhlR homodimers into monomers.

It localises to the cytoplasm. Activated by interaction with the autoinducer signal molecule N-butanoyl-L-homoserine lactone (C4-HSL or BHL), the product of the RhlI synthase. Is also activated by binding to rosmarinic acid (RA), a homoserine lactone mimic produced by plants, which induces a broad quorum sensing response, including the induction of all major quorum sensing controlled virulence factors. Rosmarinic acid secretion may be a plant defense mechanism to stimulate a premature quorum sensing response. In terms of biological role, quorum-sensing regulator that controls the expression of multiple virulence factors in response to extracellular signaling molecules called autoinducers. Involved, among others, in the transcriptional regulation of genes that are responsible for rhamnolipid surfactant biosynthesis. Acts by binding to a specific sequence in the rhlAB regulatory region, both in the presence and in the absence of its autoinducer. In the former case it activates transcription of the promoter, whereas in the latter it acts as a transcriptional repressor. Also regulates the expression of the rmlBDAC operon, encoding dTDP-L-rhamnose biosynthetic enzymes, by binding to the rml box in the promoter region. In addition, is involved in the regulation of the production of elastase (lasB) and pyocyanine. The chain is HTH-type quorum-sensing regulator RhlR from Pseudomonas aeruginosa (strain ATCC 15692 / DSM 22644 / CIP 104116 / JCM 14847 / LMG 12228 / 1C / PRS 101 / PAO1).